A 374-amino-acid polypeptide reads, in one-letter code: Trehalose-phosphate phosphatase B (374 aa).

Belongs to the trehalose phosphatase family. The cofactor is a divalent metal cation. In terms of tissue distribution, expressed in flowers.

The enzyme catalyses alpha,alpha-trehalose 6-phosphate + H2O = alpha,alpha-trehalose + phosphate. It functions in the pathway glycan biosynthesis; trehalose biosynthesis. Its function is as follows. Removes the phosphate from trehalose 6-phosphate to produce free trehalose. Trehalose accumulation in plant may improve abiotic stress tolerance. The protein is Trehalose-phosphate phosphatase B (TPPB) of Arabidopsis thaliana (Mouse-ear cress).